A 205-amino-acid chain; its full sequence is Ephrin-A1 (205 aa).

Positions 1 to 18 (MEFLWAPLLGLCCSLAAA) are cleaved as a signal peptide. The Ephrin RBD domain occupies 19–151 (DRHTVFWNSS…KLKVTVSGKI (133 aa)). A glycan (N-linked (GlcNAc...) asparagine) is linked at N26. Intrachain disulfides connect C51-C92 and C80-C140. A lipid anchor (GPI-anchor amidated serine) is attached at S182. Positions 183–205 (AAPRLSPLAWAVLLLPFLLLQTS) are cleaved as a propeptide — removed in mature form.

The protein belongs to the ephrin family. Monomer. Homodimer. Forms heterodimers with EPHA2. Binds to the receptor tyrosine kinases EPHA2, EPHA3, EPHA4, EPHA5, EPHA6 and EPHA7. Also binds with low affinity to EPHA1. Undergoes proteolysis by a metalloprotease to give rise to a soluble monomeric form. Post-translationally, N-Glycosylation is required for binding to EPHA2 receptor and inducing its internalization.

It is found in the cell membrane. The protein localises to the secreted. Functionally, cell surface GPI-bound ligand for Eph receptors, a family of receptor tyrosine kinases which are crucial for migration, repulsion and adhesion during neuronal, vascular and epithelial development. Binds promiscuously Eph receptors residing on adjacent cells, leading to contact-dependent bidirectional signaling into neighboring cells. Plays an important role in angiogenesis and tumor neovascularization. The recruitment of VAV2, VAV3 and PI3-kinase p85 subunit by phosphorylated EPHA2 is critical for EFNA1-induced RAC1 GTPase activation and vascular endothelial cell migration and assembly. Exerts anti-oncogenic effects in tumor cells through activation and down-regulation of EPHA2. Activates EPHA2 by inducing tyrosine phosphorylation which leads to its internalization and degradation. Acts as a negative regulator in the tumorigenesis of gliomas by down-regulating EPHA2 and FAK. Can evoke collapse of embryonic neuronal growth cone and regulates dendritic spine morphogenesis. This is Ephrin-A1 (EFNA1) from Sus scrofa (Pig).